Consider the following 400-residue polypeptide: Renin (400 aa).

The first 17 residues, M1–S17, serve as a signal peptide directing secretion. A propeptide spans L18 to K59 (activation peptide). N-linked (GlcNAc...) asparagine glycosylation is present at N65. Residues Y80–A397 form the Peptidase A1 domain. D98 is a catalytic residue. C111 and C118 form a disulfide bridge. N135 is a glycosylation site (N-linked (GlcNAc...) asparagine). The cysteines at positions 277 and 281 are disulfide-linked. Residue D286 is part of the active site. Residues C320 and C356 are joined by a disulfide bond. N353 is a glycosylation site (N-linked (GlcNAc...) asparagine).

The protein belongs to the peptidase A1 family. In terms of assembly, interacts with ATP6AP2. In terms of tissue distribution, kidney.

It is found in the secreted. It localises to the membrane. The catalysed reaction is Cleavage of Leu-|-Xaa bond in angiotensinogen to generate angiotensin I.. With respect to regulation, interaction with ATP6AP2 results in a 5-fold increased efficiency in angiotensinogen processing. Its function is as follows. Renin is a highly specific endopeptidase, whose only known function is to generate angiotensin I from angiotensinogen in the plasma, initiating a cascade of reactions that produce an elevation of blood pressure and increased sodium retention by the kidney. The polypeptide is Renin (REN) (Ovis aries (Sheep)).